Reading from the N-terminus, the 837-residue chain is Protein translocase subunit SecA (837 aa).

ATP is bound by residues Gln-85, 103-107, and Asp-493; that span reads GEGKT. Positions 821, 823, 832, and 833 each coordinate Zn(2+).

The protein belongs to the SecA family. In terms of assembly, monomer and homodimer. Part of the essential Sec protein translocation apparatus which comprises SecA, SecYEG and auxiliary proteins SecDF. Other proteins may also be involved. Requires Zn(2+) as cofactor.

It is found in the cell membrane. The protein localises to the cytoplasm. The catalysed reaction is ATP + H2O + cellular proteinSide 1 = ADP + phosphate + cellular proteinSide 2.. Its function is as follows. Part of the Sec protein translocase complex. Interacts with the SecYEG preprotein conducting channel. Has a central role in coupling the hydrolysis of ATP to the transfer of proteins into and across the cell membrane, serving as an ATP-driven molecular motor driving the stepwise translocation of polypeptide chains across the membrane. This Streptococcus pneumoniae (strain ATCC BAA-255 / R6) protein is Protein translocase subunit SecA.